Reading from the N-terminus, the 255-residue chain is Small ribosomal subunit protein eS1 (255 aa).

Ala-2 is subject to N-acetylalanine; partial.

Belongs to the eukaryotic ribosomal protein eS1 family. Component of the small ribosomal subunit. Mature ribosomes consist of a small (40S) and a large (60S) subunit. The 40S subunit contains about 33 different proteins and 1 molecule of RNA (18S). The 60S subunit contains about 49 different proteins and 3 molecules of RNA (25S, 5.8S and 5S).

The protein resides in the cytoplasm. The chain is Small ribosomal subunit protein eS1 from Yarrowia lipolytica (strain CLIB 122 / E 150) (Yeast).